Here is a 464-residue protein sequence, read N- to C-terminus: MPSELAMNNDELHVVMFPFLAFGHISPFVQLSNKLFSHGVHVTFLSAASNIPRIRSTLNLNPAINVISLKFPNGITNTAELPPHLAGNLIHALDLTQDQVKSLLLELKPHYVFFDFAQHWLPKLASEVGIKSVHFSVYSAISDAYITVPSRFADVEGRNITFEDLKKPPPGYPQNSNISLKAFEAMDFMFLFTRFGEKNLTGYERVLQSLGECSFIVFKTCKEIEGPYLDYIETQFRKPVLLSGPLVPEPSTDVLEEKWSKWLDGFPAKSVILCSFGSETFLSDYQIKELASGLELTGLPFILVLNFPSNLSAKAELERALPKGYLERVKNRGVVHSGWFQQQLVLKHSSVGCYVCHGGFSSVIEAMVNECQLVLLPFKGDQFFNSKLIANDLKAGVEVNRSDEDGFFHKEDILEALKTVMLEDNKEQGKQIRENHMQWSKFLSNKEIQNKFITDLVAQLKSMA.

His24 serves as the catalytic Proton acceptor. An an anthocyanidin-binding site is contributed by His24. Catalysis depends on Asp115, which acts as the Charge relay. UDP-beta-L-rhamnose-binding residues include Ser278, His357, Ser362, and Glu365. An an anthocyanidin-binding site is contributed by Gly380.

Belongs to the UDP-glycosyltransferase family. Expressed in young leaves, flowers, pods and pod shells. Barely detected in seeds, roots and root nodules.

The enzyme catalyses a flavonol 3-O-beta-D-glucoside + UDP-beta-L-rhamnose = a flavonol 3-O-[alpha-L-rhamnosyl-(1-&gt;6)-beta-D-glucoside] + UDP + H(+). Functionally, flavonol 3-O-glucoside (1-&gt;6) rhamnosyltransferase converting kaempferol 3-O-glucoside to kaempferol 3-O-rutinoside and utilizing 3-O-glucosylated/galactosylated flavonols and UDP-rhamnose as substrates. Prefers kaempferol to quercetin as an aglycon, and 3-O-galactosides to 3-O-glucosides as a glycosylation pattern. This Glycine max (Soybean) protein is UDP-glycosyltransferase 79A6.